A 368-amino-acid polypeptide reads, in one-letter code: Quinolinate synthase (368 aa).

Iminosuccinate is bound by residues H46 and S63. C110 contributes to the [4Fe-4S] cluster binding site. Residues 141-143 (YVN) and S162 contribute to the iminosuccinate site. C230 lines the [4Fe-4S] cluster pocket. Iminosuccinate contacts are provided by residues 256 to 258 (HPE) and T273. Residue C320 coordinates [4Fe-4S] cluster.

Belongs to the quinolinate synthase family. Type 3 subfamily. Requires [4Fe-4S] cluster as cofactor.

It localises to the cytoplasm. It catalyses the reaction iminosuccinate + dihydroxyacetone phosphate = quinolinate + phosphate + 2 H2O + H(+). Its pathway is cofactor biosynthesis; NAD(+) biosynthesis; quinolinate from iminoaspartate: step 1/1. Catalyzes the condensation of iminoaspartate with dihydroxyacetone phosphate to form quinolinate. The chain is Quinolinate synthase from Bacillus cereus (strain ATCC 10987 / NRS 248).